We begin with the raw amino-acid sequence, 456 residues long: UDP-N-acetylmuramoylalanine--D-glutamate ligase (456 aa).

ATP is bound at residue 113-119 (GTNGKTT).

This sequence belongs to the MurCDEF family.

Its subcellular location is the cytoplasm. It catalyses the reaction UDP-N-acetyl-alpha-D-muramoyl-L-alanine + D-glutamate + ATP = UDP-N-acetyl-alpha-D-muramoyl-L-alanyl-D-glutamate + ADP + phosphate + H(+). It functions in the pathway cell wall biogenesis; peptidoglycan biosynthesis. Its function is as follows. Cell wall formation. Catalyzes the addition of glutamate to the nucleotide precursor UDP-N-acetylmuramoyl-L-alanine (UMA). The sequence is that of UDP-N-acetylmuramoylalanine--D-glutamate ligase from Crocosphaera subtropica (strain ATCC 51142 / BH68) (Cyanothece sp. (strain ATCC 51142)).